Reading from the N-terminus, the 60-residue chain is UPF0509 protein Ent638_2183 (60 aa).

The protein belongs to the UPF0509 family.

The sequence is that of UPF0509 protein Ent638_2183 from Enterobacter sp. (strain 638).